A 748-amino-acid chain; its full sequence is Catalase-peroxidase (748 aa).

The segment at residues 92 to 238 is a cross-link (tryptophyl-tyrosyl-methioninium (Trp-Tyr) (with M-264)); that stretch reads WHSAGTYRTG…LAAVQMGLIY (147 aa). Catalysis depends on His-93, which acts as the Proton acceptor. Positions 238–264 form a cross-link, tryptophyl-tyrosyl-methioninium (Tyr-Met) (with W-92); sequence YVNPEGPDGNPDPLLAAKDIRDTFGRM. His-279 serves as a coordination point for heme b.

It belongs to the peroxidase family. Peroxidase/catalase subfamily. As to quaternary structure, homodimer or homotetramer. Heme b serves as cofactor. Post-translationally, formation of the three residue Trp-Tyr-Met cross-link is important for the catalase, but not the peroxidase activity of the enzyme.

The enzyme catalyses H2O2 + AH2 = A + 2 H2O. It catalyses the reaction 2 H2O2 = O2 + 2 H2O. In terms of biological role, bifunctional enzyme with both catalase and broad-spectrum peroxidase activity. This chain is Catalase-peroxidase, found in Xanthomonas campestris pv. campestris (strain 8004).